The sequence spans 122 residues: Large ribosomal subunit protein bL19 (122 aa).

This sequence belongs to the bacterial ribosomal protein bL19 family.

Its function is as follows. This protein is located at the 30S-50S ribosomal subunit interface and may play a role in the structure and function of the aminoacyl-tRNA binding site. The sequence is that of Large ribosomal subunit protein bL19 from Chlamydia abortus (strain DSM 27085 / S26/3) (Chlamydophila abortus).